We begin with the raw amino-acid sequence, 248 residues long: Ubiquinone/menaquinone biosynthesis C-methyltransferase UbiE (248 aa).

Residues Ser68, Asp92, and 120–121 contribute to the S-adenosyl-L-methionine site; that span reads NA.

The protein belongs to the class I-like SAM-binding methyltransferase superfamily. MenG/UbiE family.

It carries out the reaction a 2-demethylmenaquinol + S-adenosyl-L-methionine = a menaquinol + S-adenosyl-L-homocysteine + H(+). It catalyses the reaction a 2-methoxy-6-(all-trans-polyprenyl)benzene-1,4-diol + S-adenosyl-L-methionine = a 5-methoxy-2-methyl-3-(all-trans-polyprenyl)benzene-1,4-diol + S-adenosyl-L-homocysteine + H(+). Its pathway is quinol/quinone metabolism; menaquinone biosynthesis; menaquinol from 1,4-dihydroxy-2-naphthoate: step 2/2. It participates in cofactor biosynthesis; ubiquinone biosynthesis. Its function is as follows. Methyltransferase required for the conversion of demethylmenaquinol (DMKH2) to menaquinol (MKH2) and the conversion of 2-polyprenyl-6-methoxy-1,4-benzoquinol (DDMQH2) to 2-polyprenyl-3-methyl-6-methoxy-1,4-benzoquinol (DMQH2). This is Ubiquinone/menaquinone biosynthesis C-methyltransferase UbiE from Rickettsia typhi (strain ATCC VR-144 / Wilmington).